Here is a 360-residue protein sequence, read N- to C-terminus: Photosystem II protein D1 1 (360 aa).

Helical transmembrane passes span 29–46, 118–133, and 142–156; these read YVGW…AATV, HFLI…QWEL, and WICV…SATA. A chlorophyll a-binding site is contributed by His118. Pheophytin a is bound at residue Tyr126. 2 residues coordinate [CaMn4O5] cluster: Asp170 and Glu189. Residues 197–218 form a helical membrane-spanning segment; the sequence is FHMLGVAGVFGGSLFSAMHGSL. His198 lines the chlorophyll a pocket. Residues His215 and 264 to 265 each bind a quinone; that span reads SF. His215 lines the Fe cation pocket. His272 provides a ligand contact to Fe cation. The helical transmembrane segment at 274–288 threads the bilayer; that stretch reads FLAAWPVIGIWFTAL. [CaMn4O5] cluster contacts are provided by His332, Glu333, Asp342, and Ala344. Residues 345 to 360 constitute a propeptide that is removed on maturation; it reads AGEVAPVALTAPAING.

It belongs to the reaction center PufL/M/PsbA/D family. PSII is composed of 1 copy each of membrane proteins PsbA, PsbB, PsbC, PsbD, PsbE, PsbF, PsbH, PsbI, PsbJ, PsbK, PsbL, PsbM, PsbT, PsbX, PsbY, PsbZ, Psb30/Ycf12, peripheral proteins PsbO, CyanoQ (PsbQ), PsbU, PsbV and a large number of cofactors. It forms dimeric complexes. The D1/D2 heterodimer binds P680, chlorophylls that are the primary electron donor of PSII, and subsequent electron acceptors. It shares a non-heme iron and each subunit binds pheophytin, quinone, additional chlorophylls, carotenoids and lipids. D1 provides most of the ligands for the Mn4-Ca-O5 cluster of the oxygen-evolving complex (OEC). There is also a Cl(-1) ion associated with D1 and D2, which is required for oxygen evolution. The PSII complex binds additional chlorophylls, carotenoids and specific lipids. is required as a cofactor. Tyr-161 forms a radical intermediate that is referred to as redox-active TyrZ, YZ or Y-Z. In terms of processing, C-terminally processed by CtpA; processing is essential to allow assembly of the oxygen-evolving complex and thus photosynthetic growth.

The protein localises to the cellular thylakoid membrane. The catalysed reaction is 2 a plastoquinone + 4 hnu + 2 H2O = 2 a plastoquinol + O2. Photosystem II (PSII) is a light-driven water:plastoquinone oxidoreductase that uses light energy to abstract electrons from H(2)O, generating O(2) and a proton gradient subsequently used for ATP formation. It consists of a core antenna complex that captures photons, and an electron transfer chain that converts photonic excitation into a charge separation. The D1/D2 (PsbA/PsbD) reaction center heterodimer binds P680, the primary electron donor of PSII as well as several subsequent electron acceptors. The chain is Photosystem II protein D1 1 from Nostoc sp. (strain PCC 7120 / SAG 25.82 / UTEX 2576).